Consider the following 514-residue polypeptide: Cytochrome P450 94A1 (514 aa).

Residues 7–29 (EVLLPYLLPLLLLILPTTIFFLT) form a helical membrane-spanning segment. Position 458 (cysteine 458) interacts with heme.

This sequence belongs to the cytochrome P450 family. Requires heme as cofactor.

The protein localises to the endoplasmic reticulum membrane. Functionally, catalyzes the omega-hydroxylation of various fatty acids (FA) from 10 to 18 carbon atoms. The substrate specificity is higher for laurate &gt; palmitate &gt; myristate &gt; linolenate &gt; linoleate &gt; oleate &gt; caprate. May play a minor role in cutin synthesis and could be involved in plant defense. The chain is Cytochrome P450 94A1 (CYP94A1) from Vicia sativa (Spring vetch).